A 312-amino-acid chain; its full sequence is Olfactory receptor 52A1 (312 aa).

At 1 to 27 (MSISNITVYMPSVLTLVGIPGLESVQC) the chain is on the extracellular side. N-linked (GlcNAc...) asparagine glycosylation occurs at N5. A helical membrane pass occupies residues 28 to 48 (WIGIPFCAIYLIAMIGNSLLL). Topologically, residues 49–56 (SIIKSERS) are cytoplasmic. The chain crosses the membrane as a helical span at residues 57-77 (LHEPLYIFLGMLGATDIALAS). Residues 78-101 (SIMPKMLGIFWFNVPEIYFDSCLL) are Extracellular-facing. A disulfide bridge connects residues C99 and C182. The chain crosses the membrane as a helical span at residues 102–122 (QMWFIHTLQGIESGILVAMAL). Over 123–141 (DRYVAICYPLRHANIFTHQ) the chain is Cytoplasmic. Residues 142 to 162 (LVIQIGTMVVLRAAILVAPCL) form a helical membrane-spanning segment. Over 163–199 (VLIKCRFQFYHTTVISHSYCEHMAIVKLAAANVQVNK) the chain is Extracellular. A helical membrane pass occupies residues 200 to 220 (IYGLFVAFTVAGFDLTFITLS). At 221 to 240 (YIQIFITVFRLPQKEARFKA) the chain is on the cytoplasmic side. Residues 241–261 (FNTCIAHICVFLQFYLLAFFS) form a helical membrane-spanning segment. The Extracellular segment spans residues 262-276 (FFTHRFGSHISPYIH). A helical membrane pass occupies residues 277-297 (ILFSSIYLLVPPFLNPLVYGA). Over 298–312 (KTTQIRIHVVKMFCS) the chain is Cytoplasmic.

The protein belongs to the G-protein coupled receptor 1 family.

It localises to the cell membrane. Its function is as follows. Odorant receptor. The sequence is that of Olfactory receptor 52A1 (OR52A1) from Homo sapiens (Human).